The sequence spans 183 residues: Endoribonuclease YbeY (183 aa).

3 residues coordinate Zn(2+): histidine 140, histidine 144, and histidine 150.

The protein belongs to the endoribonuclease YbeY family. Requires Zn(2+) as cofactor.

The protein localises to the cytoplasm. Single strand-specific metallo-endoribonuclease involved in late-stage 70S ribosome quality control and in maturation of the 3' terminus of the 16S rRNA. The sequence is that of Endoribonuclease YbeY from Bradyrhizobium diazoefficiens (strain JCM 10833 / BCRC 13528 / IAM 13628 / NBRC 14792 / USDA 110).